Here is a 412-residue protein sequence, read N- to C-terminus: Gamma-glutamyl phosphate reductase (412 aa).

It belongs to the gamma-glutamyl phosphate reductase family.

It is found in the cytoplasm. It catalyses the reaction L-glutamate 5-semialdehyde + phosphate + NADP(+) = L-glutamyl 5-phosphate + NADPH + H(+). Its pathway is amino-acid biosynthesis; L-proline biosynthesis; L-glutamate 5-semialdehyde from L-glutamate: step 2/2. In terms of biological role, catalyzes the NADPH-dependent reduction of L-glutamate 5-phosphate into L-glutamate 5-semialdehyde and phosphate. The product spontaneously undergoes cyclization to form 1-pyrroline-5-carboxylate. In Actinobacillus pleuropneumoniae serotype 3 (strain JL03), this protein is Gamma-glutamyl phosphate reductase.